Here is a 734-residue protein sequence, read N- to C-terminus: MPRAPTSAIKKQPLTFAQLAAYDDILTDALIDHVYYWTAIPKNRPLYHPSRGIREEEITKIIQTHLIVDPDLAIAEEKLLATDGLRKFHNSLRTDKEKEDFKAHLRRYISIYLPDCPFEVNATNRFTIDSYEASITARRPIRRNEAIKYLAGTQVTVTPEEEAQLALRKKDFSLVVSSRSKLTSLFMGPARFANHDCAANARLVTRGSAGIEIFACRDIGLGEEITVTYSESYFGENNCDCLCQTCEDNVANGWKPKDGTVPVHRSIEESVLGDDQGYSLRRRRRERSVSVAGSRTSSVTPDIRPRIFKTAKNRAMASDRASTTDSDGIDVVAMAVAAPKRNFDTTALSSPPLTPAKRQKPNHYDVVPLPLGLDVSRDSSASGPVDSLIATEDEKSTATQATTPEFEEPKPPSMREKPLLSPEMSPMKEGATPVGALNGERDEPTETGAPLSVLPTTETDLPEETLDIAATTPSLFPSSECSMTANDLPEHITPVSEPPRLTQEGKSVARQDSQETIIEESLAVPNSAPSQIQEAENNAQQGAETPVLGASSLTAEPHNEVAPVISAVSTKKKKRRVSEKPAPEPVRKQRVPGDYTLTPLLLAQPETAWIHCTNCNTAFVQSDAYYTRANCSRCERHSKLYGYVWPKTAPAGKNDREERVLDHRLINRFLHPDDEAIIRGRKPWRERLGQSSSSLAPSEERGRQRESGTPQGTPGDNYRRSGRARRASAKAMAQ.

The 115-residue stretch at 116-230 (CPFEVNATNR…LGEEITVTYS (115 aa)) folds into the SET domain. Disordered stretches follow at residues 343 to 459 (FDTT…TTET), 523 to 543 (AVPN…QQGA), 567 to 591 (AVST…KQRV), and 681 to 734 (RKPW…AMAQ). The span at 407-418 (EEPKPPSMREKP) shows a compositional bias: basic and acidic residues. The segment covering 527–543 (SAPSQIQEAENNAQQGA) has biased composition (polar residues). Residues 578 to 587 (SEKPAPEPVR) are compositionally biased toward basic and acidic residues.

It belongs to the class V-like SAM-binding methyltransferase superfamily. Histone-lysine methyltransferase family. Suvar4-20 subfamily.

It is found in the nucleus. The protein resides in the chromosome. It catalyses the reaction L-lysyl(20)-[histone H4] + 3 S-adenosyl-L-methionine = N(6),N(6),N(6)-trimethyl-L-lysyl(20)-[histone H4] + 3 S-adenosyl-L-homocysteine + 3 H(+). In terms of biological role, histone methyltransferase that trimethylates 'Lys-20' of histone H4 to form H4K20me3. This is Histone-lysine N-methyltransferase SET9 (SET9) from Chaetomium globosum (strain ATCC 6205 / CBS 148.51 / DSM 1962 / NBRC 6347 / NRRL 1970) (Soil fungus).